The chain runs to 155 residues: Aspartate carbamoyltransferase regulatory chain (155 aa).

Zn(2+)-binding residues include C113, C118, C139, and C142.

It belongs to the PyrI family. In terms of assembly, contains catalytic and regulatory chains. Zn(2+) serves as cofactor.

Involved in allosteric regulation of aspartate carbamoyltransferase. The chain is Aspartate carbamoyltransferase regulatory chain from Methanoculleus marisnigri (strain ATCC 35101 / DSM 1498 / JR1).